The sequence spans 591 residues: Myelin expression factor 2 (591 aa).

Positions 1–92 are disordered; sequence MADADKSEAA…GEKKGPNRNR (92 aa). Positions 22–36 are enriched in basic and acidic residues; it reads EPRRDTHPGEPEKPP. Lys44 is covalently cross-linked (Glycyl lysine isopeptide (Lys-Gly) (interchain with G-Cter in SUMO2)). Composition is skewed to basic and acidic residues over residues 45-63 and 74-87; these read MENDESVKEEKSDLKEKST and YSKDKNSGTGEKKG. RRM domains lie at 91 to 169 and 224 to 301; these read NRVF…EDPD and STIF…MDDK. An omega-N-methylarginine mark is found at Arg397 and Arg417. Ser422 bears the Phosphoserine mark. Residues 514-590 form the RRM 3 domain; that stretch reads NQIFVRNLPF…REIDVRLDRN (77 aa).

As to quaternary structure, monomer. In terms of tissue distribution, highly expressed in the brain.

It localises to the nucleus. Its function is as follows. Transcriptional repressor of the myelin basic protein gene (MBP). Binds to the proximal MB1 element 5'-TTGTCC-3' of the MBP promoter. Its binding to MB1 and function are inhibited by PURA. The sequence is that of Myelin expression factor 2 (Myef2) from Mus musculus (Mouse).